The following is a 550-amino-acid chain: Hydroxylamine reductase (550 aa).

Residues C3, C6, C18, and C25 each coordinate [2Fe-2S] cluster. Residues H249, E273, C317, C405, C433, C458, E492, and K494 each contribute to the hybrid [4Fe-2O-2S] cluster site. Position 405 is a cysteine persulfide (C405).

The protein belongs to the HCP family. The cofactor is [2Fe-2S] cluster. Requires hybrid [4Fe-2O-2S] cluster as cofactor.

The protein resides in the cytoplasm. It catalyses the reaction A + NH4(+) + H2O = hydroxylamine + AH2 + H(+). Catalyzes the reduction of hydroxylamine to form NH(3) and H(2)O. In Escherichia coli O7:K1 (strain IAI39 / ExPEC), this protein is Hydroxylamine reductase.